Here is a 503-residue protein sequence, read N- to C-terminus: Inosine-5'-monophosphate dehydrogenase (503 aa).

Residues G20 and S22 each contribute to the K(+) site. 2 consecutive CBS domains span residues 103–163 (FVVS…ETKV) and 167–228 (MTPF…LVDS). Residue 261-263 (DSS) participates in NAD(+) binding. The K(+) site is built by D264, F266, G314, and G316. An NAD(+)-binding site is contributed by 312–314 (GIG). IMP is bound at residue S317. K(+) is bound at residue C319. The Thioimidate intermediate role is filled by C319. IMP contacts are provided by residues 358 to 360 (DGG), 381 to 382 (GR), and 405 to 409 (YWGEG). R418 serves as the catalytic Proton acceptor. IMP is bound at residue E431. K(+)-binding residues include N460, E485, G486, and G487.

This sequence belongs to the IMPDH/GMPR family. Homotetramer. The cofactor is K(+).

The protein localises to the cytoplasm. It catalyses the reaction IMP + NAD(+) + H2O = XMP + NADH + H(+). Its pathway is purine metabolism; XMP biosynthesis via de novo pathway; XMP from IMP: step 1/1. With respect to regulation, mycophenolic acid (MPA) is a non-competitive inhibitor that prevents formation of the closed enzyme conformation by binding to the same site as the amobile flap. In contrast, mizoribine monophosphate (MZP) is a competitive inhibitor that induces the closed conformation. MPA is a potent inhibitor of mammalian IMPDHs but a poor inhibitor of the bacterial enzymes. MZP is a more potent inhibitor of bacterial IMPDH. Catalyzes the conversion of inosine 5'-phosphate (IMP) to xanthosine 5'-phosphate (XMP), the first committed and rate-limiting step in the de novo synthesis of guanine nucleotides, and therefore plays an important role in the regulation of cell growth. Could also have a single-stranded nucleic acid-binding activity and could play a role in RNA and/or DNA metabolism. The polypeptide is Inosine-5'-monophosphate dehydrogenase (Tritrichomonas foetus (Trichomonas foetus)).